We begin with the raw amino-acid sequence, 527 residues long: Catalase (527 aa).

Over residues 1–22 (MSDSRDPASDQMKQWKEQRASQ) the composition is skewed to basic and acidic residues. A disordered region spans residues 1–34 (MSDSRDPASDQMKQWKEQRASQRPDVLTTGGGNP). The residue at position 2 (serine 2) is an N-acetylserine. Position 9 is a phosphoserine (serine 9). Residue lysine 13 is modified to N6-succinyllysine. The residue at position 21 (serine 21) is a Phosphoserine. Residues histidine 75 and asparagine 148 contribute to the active site. NADP(+) contacts are provided by histidine 194, serine 201, arginine 203, and asparagine 213. Residue lysine 221 is modified to N6-succinyllysine. Position 233 is an N6-acetyllysine (lysine 233). Positions 237, 303, 305, and 306 each coordinate NADP(+). Lysine 306 is subject to N6-acetyllysine; alternate. The residue at position 306 (lysine 306) is an N6-succinyllysine; alternate. Heme is bound at residue tyrosine 358. Phosphoserine is present on residues serine 417 and serine 422. Lysine 430 carries the N6-acetyllysine; alternate modification. Residue lysine 430 is modified to N6-succinyllysine; alternate. Serine 434 carries the phosphoserine modification. N6-acetyllysine; alternate is present on residues lysine 449 and lysine 480. N6-succinyllysine; alternate occurs at positions 449 and 480. Lysine 499 is subject to N6-acetyllysine. The residue at position 511 (threonine 511) is a Phosphothreonine. Serine 517 carries the phosphoserine modification. Lysine 522 is subject to N6-succinyllysine. Positions 524 to 527 (KANL) match the Microbody targeting signal; atypical motif.

It belongs to the catalase family. Homotetramer. Interacts (via microbody targeting signal) with PEX5, monomeric form interacts with PEX5, leading to its translocation into peroxisomes. It depends on heme as a cofactor. Requires NADP(+) as cofactor.

It localises to the peroxisome matrix. It carries out the reaction 2 H2O2 = O2 + 2 H2O. Catalyzes the degradation of hydrogen peroxide (H(2)O(2)) generated by peroxisomal oxidases to water and oxygen, thereby protecting cells from the toxic effects of hydrogen peroxide. Promotes growth of cells including T-cells, B-cells, myeloid leukemia cells, melanoma cells, mastocytoma cells and normal and transformed fibroblast cells. This Mus musculus (Mouse) protein is Catalase (Cat).